A 176-amino-acid polypeptide reads, in one-letter code: Disulfide bond formation protein B (176 aa).

Over 1–14 (MLRFLNQCSQGRGA) the chain is Cytoplasmic. A helical transmembrane segment spans residues 15-31 (WLLMAFTALALELTALW). Over 32 to 49 (FQHVMLLKPCVLCIYERC) the chain is Periplasmic. A disulfide bridge connects residues Cys41 and Cys44. The helical transmembrane segment at 50–65 (ALFGVLGAALIGAIAP) threads the bilayer. Residues 66 to 71 (KTPLRY) are Cytoplasmic-facing. Residues 72–89 (VAMVIWLYSAFRGVQLTY) form a helical membrane-spanning segment. Residues 90 to 144 (EHTMLQLYPSPFATCDFMVRFPEWLPLDKWVPQVFVASGDCAERQWDFLGMEMPQ) lie on the Periplasmic side of the membrane. Cys104 and Cys130 are disulfide-bonded. Residues 145 to 163 (WLLGIFIAYLIVAVLVVIS) traverse the membrane as a helical segment. The Cytoplasmic portion of the chain corresponds to 164–176 (QPFKAKKRDLFGR).

It belongs to the DsbB family.

Its subcellular location is the cell inner membrane. Required for disulfide bond formation in some periplasmic proteins such as PhoA or OmpA. Acts by oxidizing the DsbA protein. In Shigella flexneri, this protein is Disulfide bond formation protein B.